Here is a 342-residue protein sequence, read N- to C-terminus: uncharacterized protein (342 aa).

The protein belongs to the cycloisomerase 2 family.

This is an uncharacterized protein from Staphylococcus aureus (strain N315).